The following is a 125-amino-acid chain: Holo-[acyl-carrier-protein] synthase (125 aa).

Mg(2+)-binding residues include Asp8 and Glu56.

This sequence belongs to the P-Pant transferase superfamily. AcpS family. Mg(2+) is required as a cofactor.

It localises to the cytoplasm. It carries out the reaction apo-[ACP] + CoA = holo-[ACP] + adenosine 3',5'-bisphosphate + H(+). In terms of biological role, transfers the 4'-phosphopantetheine moiety from coenzyme A to a Ser of acyl-carrier-protein. This Borrelia hermsii (strain HS1 / DAH) protein is Holo-[acyl-carrier-protein] synthase.